The following is a 219-amino-acid chain: Proteasome subunit beta type-9 (219 aa).

A propeptide spans 1 to 20 (MLRAGAPTAGSFRTKEVHTG) (removed in mature form). Thr-21 (nucleophile) is an active-site residue. Residues Lys-53 and Lys-109 each carry the N6-acetyllysine modification.

This sequence belongs to the peptidase T1B family. As to quaternary structure, the 26S proteasome consists of a 20S proteasome core and two 19S regulatory subunits. The 20S proteasome core is composed of 28 subunits that are arranged in four stacked rings, resulting in a barrel-shaped structure. The two end rings are each formed by seven alpha subunits, and the two central rings are each formed by seven beta subunits. The catalytic chamber with the active sites is on the inside of the barrel. Component of the immunoproteasome, where it displaces the equivalent housekeeping subunit PSMB6. Component of the spermatoproteasome, a form of the proteasome specifically found in testis. Autocleaved. The resulting N-terminal Thr residue of the mature subunit is responsible for the nucleophile proteolytic activity.

It is found in the cytoplasm. The protein resides in the nucleus. It catalyses the reaction Cleavage of peptide bonds with very broad specificity.. Its function is as follows. The proteasome is a multicatalytic proteinase complex which is characterized by its ability to cleave peptides with Arg, Phe, Tyr, Leu, and Glu adjacent to the leaving group at neutral or slightly basic pH. The proteasome has an ATP-dependent proteolytic activity. This subunit is involved in antigen processing to generate class I binding peptides. The sequence is that of Proteasome subunit beta type-9 (Psmb9) from Mus platythrix (Flat-haired mouse).